Here is a 326-residue protein sequence, read N- to C-terminus: Vitamin B12 import system permease protein BtuC (326 aa).

Transmembrane regions (helical) follow at residues tryptophan 15–glutamate 35, leucine 61–phenylalanine 81, proline 88–glycine 108, leucine 112–leucine 132, leucine 146–phenylalanine 166, glycine 184–isoleucine 204, glycine 240–isoleucine 260, valine 274–alanine 294, and glutamate 302–leucine 322.

The protein belongs to the binding-protein-dependent transport system permease family. FecCD subfamily. As to quaternary structure, the complex is composed of two ATP-binding proteins (BtuD), two transmembrane proteins (BtuC) and a solute-binding protein (BtuF).

The protein resides in the cell inner membrane. Part of the ABC transporter complex BtuCDF involved in vitamin B12 import. Involved in the translocation of the substrate across the membrane. In Shigella boydii serotype 18 (strain CDC 3083-94 / BS512), this protein is Vitamin B12 import system permease protein BtuC.